The chain runs to 463 residues: MDVFTQYAYNDSIFDNGTWSANETTKDETHPYNYYAMLLTLLIFVIVFGNVLVCMAVSREKALQTTTNYLIVSLAVADLLVATLVMPWVVYLEVVGEWRFSKIHCDIFVTLDVMMCTASILNLCAISIDRYTAVAMPMLYNTRYSSRRRVTVMISVVWVLSFAISCPLLFGLNNTATRDQSLCFIANPAFVVYSSIVSFYVPFIVTLLVYVQIYVVLRKRRKRVNTKPKQRLCQAADPDIPTSLKDKCTHPEDVRLCTMIVKSNGSFPVNKKKVIFIKDGVNEVEGLELDELNYCGGSHKQPPPQQQPRALGDTPATSHQLLMSTKANASPTSTPPTPPEEGQRTEKNGDPTKEAQGNPAPVVALRNGKTQTSLKTLSKRKISQQKEKKATQMLAIVLGVFIICWLPFFITHILNTHCTRCKVPAEMYNAFTWLGYVNSAVNPIIYTTFNVEFRKAFIKILHC.

The Extracellular portion of the chain corresponds to 1 to 35 (MDVFTQYAYNDSIFDNGTWSANETTKDETHPYNYY). 3 N-linked (GlcNAc...) asparagine glycosylation sites follow: N10, N16, and N22. The helical transmembrane segment at 36 to 58 (AMLLTLLIFVIVFGNVLVCMAVS) threads the bilayer. At 59–68 (REKALQTTTN) the chain is on the cytoplasmic side. The chain crosses the membrane as a helical span at residues 69 to 91 (YLIVSLAVADLLVATLVMPWVVY). At 92–106 (LEVVGEWRFSKIHCD) the chain is on the extracellular side. C105 and C183 are disulfide-bonded. A helical transmembrane segment spans residues 107-128 (IFVTLDVMMCTASILNLCAISI). Over 129-149 (DRYTAVAMPMLYNTRYSSRRR) the chain is Cytoplasmic. A helical membrane pass occupies residues 150–170 (VTVMISVVWVLSFAISCPLLF). The Extracellular segment spans residues 171–189 (GLNNTATRDQSLCFIANPA). A helical membrane pass occupies residues 190 to 214 (FVVYSSIVSFYVPFIVTLLVYVQIY). Topologically, residues 215–392 (VVLRKRRKRV…SQQKEKKATQ (178 aa)) are cytoplasmic. Residues 295–362 (CGGSHKQPPP…KEAQGNPAPV (68 aa)) are disordered. Over residues 315–329 (PATSHQLLMSTKANA) the composition is skewed to polar residues. The segment covering 341 to 353 (EGQRTEKNGDPTK) has biased composition (basic and acidic residues). A helical transmembrane segment spans residues 393 to 414 (MLAIVLGVFIICWLPFFITHIL). Residues 415–429 (NTHCTRCKVPAEMYN) are Extracellular-facing. A disulfide bridge connects residues C418 and C421. The chain crosses the membrane as a helical span at residues 430-451 (AFTWLGYVNSAVNPIIYTTFNV). Residues 452-463 (EFRKAFIKILHC) are Cytoplasmic-facing.

Belongs to the G-protein coupled receptor 1 family.

It localises to the cell membrane. Receptor for dopamine. The protein is D(2)-like dopamine receptor (d215) of Takifugu rubripes (Japanese pufferfish).